The sequence spans 271 residues: L-aspartate dehydrogenase (271 aa).

Residues Ala124 and Asn192 each coordinate NAD(+). His222 is a catalytic residue.

Belongs to the L-aspartate dehydrogenase family.

The catalysed reaction is L-aspartate + NADP(+) + H2O = oxaloacetate + NH4(+) + NADPH + H(+). It catalyses the reaction L-aspartate + NAD(+) + H2O = oxaloacetate + NH4(+) + NADH + H(+). The protein operates within cofactor biosynthesis; NAD(+) biosynthesis; iminoaspartate from L-aspartate (dehydrogenase route): step 1/1. In terms of biological role, specifically catalyzes the NAD or NADP-dependent dehydrogenation of L-aspartate to iminoaspartate. This chain is L-aspartate dehydrogenase, found in Methanococcoides burtonii (strain DSM 6242 / NBRC 107633 / OCM 468 / ACE-M).